Consider the following 364-residue polypeptide: Chorismate synthase (364 aa).

Positions 48 and 54 each coordinate NADP(+). FMN contacts are provided by residues arginine 129 to serine 131, asparagine 243 to alanine 244, glycine 288, lysine 303 to serine 307, and arginine 329.

It belongs to the chorismate synthase family. As to quaternary structure, homotetramer. Requires FMNH2 as cofactor.

It carries out the reaction 5-O-(1-carboxyvinyl)-3-phosphoshikimate = chorismate + phosphate. It participates in metabolic intermediate biosynthesis; chorismate biosynthesis; chorismate from D-erythrose 4-phosphate and phosphoenolpyruvate: step 7/7. In terms of biological role, catalyzes the anti-1,4-elimination of the C-3 phosphate and the C-6 proR hydrogen from 5-enolpyruvylshikimate-3-phosphate (EPSP) to yield chorismate, which is the branch point compound that serves as the starting substrate for the three terminal pathways of aromatic amino acid biosynthesis. This reaction introduces a second double bond into the aromatic ring system. The protein is Chorismate synthase of Chelativorans sp. (strain BNC1).